The chain runs to 201 residues: Recombination protein RecR (201 aa).

The segment at 57–72 (CQVCYSLSDNDICDIC) adopts a C4-type zinc-finger fold. In terms of domain architecture, Toprim spans 80-177 (NKICIVESYP…RITRITYGIS (98 aa)).

This sequence belongs to the RecR family.

Functionally, may play a role in DNA repair. It seems to be involved in an RecBC-independent recombinational process of DNA repair. It may act with RecF and RecO. The polypeptide is Recombination protein RecR (Brachyspira hyodysenteriae (strain ATCC 49526 / WA1)).